The primary structure comprises 401 residues: Chalcone synthase 3 (401 aa).

Cys-168 is an active-site residue.

The protein belongs to the thiolase-like superfamily. Chalcone/stilbene synthases family.

It catalyses the reaction (E)-4-coumaroyl-CoA + 3 malonyl-CoA + 3 H(+) = 2',4,4',6'-tetrahydroxychalcone + 3 CO2 + 4 CoA. It functions in the pathway secondary metabolite biosynthesis; flavonoid biosynthesis. The primary product of this enzyme is 4,2',4',6'-tetrahydroxychalcone (also termed naringenin-chalcone or chalcone) which can under specific conditions spontaneously isomerize into naringenin. This is Chalcone synthase 3 (CHS3) from Sorghum bicolor (Sorghum).